The chain runs to 176 residues: MDLPGPIHDFLLVFLGSGLILGGLGVVLLPNPIYSAFSLGLVLVCTSLFYILSNSHFVAAAQLLIYVGAINVLIIFAVMFMNGSEYYKDFHLWTVGDGVTSMVCTSIFVSLITTIPDTSWYGIIWTTKSNQIVEQDLISNSQQIGIHLSTDFFLPFELISIILLVSLIGAITVARQ.

The next 5 membrane-spanning stretches (helical) occupy residues 10–30 (FLLV…VLLP), 32–52 (PIYS…FYIL), 61–81 (AQLL…VMFM), 92–112 (LWTV…VSLI), and 152–172 (FFLP…GAIT).

This sequence belongs to the complex I subunit 6 family. In terms of assembly, NDH is composed of at least 16 different subunits, 5 of which are encoded in the nucleus.

The protein resides in the plastid. The protein localises to the chloroplast thylakoid membrane. The enzyme catalyses a plastoquinone + NADH + (n+1) H(+)(in) = a plastoquinol + NAD(+) + n H(+)(out). It catalyses the reaction a plastoquinone + NADPH + (n+1) H(+)(in) = a plastoquinol + NADP(+) + n H(+)(out). In terms of biological role, NDH shuttles electrons from NAD(P)H:plastoquinone, via FMN and iron-sulfur (Fe-S) centers, to quinones in the photosynthetic chain and possibly in a chloroplast respiratory chain. The immediate electron acceptor for the enzyme in this species is believed to be plastoquinone. Couples the redox reaction to proton translocation, and thus conserves the redox energy in a proton gradient. The protein is NAD(P)H-quinone oxidoreductase subunit 6, chloroplastic (ndhG) of Daucus carota (Wild carrot).